Here is a 363-residue protein sequence, read N- to C-terminus: Pulmonary surfactant-associated protein B (363 aa).

Residues 1–16 (LLWLLLLPTLCGLGAA) form the signal peptide. A propeptide spanning residues 17–180 (DWSAPSLACA…PHTQDLSEQQ (164 aa)) is cleaved from the precursor. One can recognise a Saposin A-type domain in the interval 18–58 (WSAPSLACARGPAFWCQSLEQALQCRALGHCLQEVWGNARA). 3 Saposin B-type domains span residues 58-140 (ADDL…KPGL), 184-261 (PLPY…SHED), and 277-352 (QESK…RTTF). Disulfide bonds link Cys62-Cys136, Cys65-Cys130, Cys93-Cys105, Cys188-Cys257, Cys191-Cys251, Cys215-Cys226, Cys281-Cys348, Cys284-Cys342, and Cys307-Cys317. A propeptide spanning residues 260-363 (EDSAGPALAS…PLQCIHIPHF (104 aa)) is cleaved from the precursor. Residue Asn293 is glycosylated (N-linked (GlcNAc...) asparagine).

Homodimer; disulfide-linked.

The protein localises to the secreted. It localises to the extracellular space. The protein resides in the surface film. Pulmonary surfactant-associated proteins promote alveolar stability by lowering the surface tension at the air-liquid interface in the peripheral air spaces. SP-B increases the collapse pressure of palmitic acid to nearly 70 millinewtons per meter. This is Pulmonary surfactant-associated protein B (SFTPB) from Canis lupus familiaris (Dog).